We begin with the raw amino-acid sequence, 498 residues long: Diacylglycerol O-acyltransferase 1A (498 aa).

Residues 1-67 (MAISDEPETV…ANSQPQQKQD (67 aa)) form a disordered region. The next 7 membrane-spanning stretches (helical) occupy residues 102 to 122 (HAGL…RLII), 146 to 166 (WPLF…FIVE), 178 to 198 (VVVV…VLVI), 203 to 223 (SAFL…LKLV), 253 to 273 (YPYN…TLCY), 295 to 315 (LIIF…PIVQ), and 342 to 362 (VWLC…AELL). An FYXDWWN motif motif is present at residues 369–375 (FYQDWWN). 3 helical membrane-spanning segments follow: residues 410 to 430 (AVAL…CIAV), 432 to 452 (CHIF…LVFI), and 465 to 485 (VGNM…CVLL). Histidine 424 is a catalytic residue.

Belongs to the membrane-bound acyltransferase family. Sterol o-acyltransferase subfamily. As to expression, highly expressed in flowers and pods. Expressed at low levels in roots, stems and leaves.

The protein localises to the endoplasmic reticulum membrane. The enzyme catalyses an acyl-CoA + a 1,2-diacyl-sn-glycerol = a triacyl-sn-glycerol + CoA. It functions in the pathway glycerolipid metabolism; triacylglycerol biosynthesis. In terms of biological role, major contributor to triacylglycerol (TAG) synthesis and oil accumulation in developing seeds. Catalyzes the acylation of the sn-3 hydroxy group of sn-1,2-diacylglycerol using acyl-CoA. Has a marked preference for oleoyl-CoA (18:1) and sn-1,2-dioleoylglycerol over vernoloyl-CoA and sn-1,2-divernoloylglycerol. Can use oleoyl-CoA, linoleoyl-CoA and linolenoyl-CoA as substrates. The protein is Diacylglycerol O-acyltransferase 1A of Glycine max (Soybean).